A 247-amino-acid chain; its full sequence is Uridylate kinase (247 aa).

14 to 17 (KLSG) contacts ATP. The tract at residues 22-27 (GERGVG) is involved in allosteric activation by GTP. Gly-56 provides a ligand contact to UMP. Gly-57 and Arg-61 together coordinate ATP. UMP contacts are provided by residues Asp-76 and 137–144 (IGSPYFST). ATP contacts are provided by Asn-165, Tyr-171, and Asp-174.

Belongs to the UMP kinase family. As to quaternary structure, homohexamer.

It is found in the cytoplasm. It carries out the reaction UMP + ATP = UDP + ADP. It functions in the pathway pyrimidine metabolism; CTP biosynthesis via de novo pathway; UDP from UMP (UMPK route): step 1/1. With respect to regulation, allosterically activated by GTP. Inhibited by UTP. Catalyzes the reversible phosphorylation of UMP to UDP. The protein is Uridylate kinase of Streptococcus pneumoniae (strain ATCC BAA-255 / R6).